Consider the following 156-residue polypeptide: rRNA methyltransferase (156 aa).

Functionally, modifies 16S rRNA so making ribosomes resistant to certain aminoglycosides. This is rRNA methyltransferase (kamC) from Saccharopolyspora hirsuta.